The sequence spans 697 residues: Elongation factor G (697 aa).

The tr-type G domain occupies 8 to 283; it reads ERCRNIGIMA…AVVDYLPSPL (276 aa). Residues 17-24, 81-85, and 135-138 each bind GTP; these read AHIDAGKT, DTPGH, and NKID.

Belongs to the TRAFAC class translation factor GTPase superfamily. Classic translation factor GTPase family. EF-G/EF-2 subfamily.

The protein resides in the cytoplasm. Functionally, catalyzes the GTP-dependent ribosomal translocation step during translation elongation. During this step, the ribosome changes from the pre-translocational (PRE) to the post-translocational (POST) state as the newly formed A-site-bound peptidyl-tRNA and P-site-bound deacylated tRNA move to the P and E sites, respectively. Catalyzes the coordinated movement of the two tRNA molecules, the mRNA and conformational changes in the ribosome. This is Elongation factor G from Koribacter versatilis (strain Ellin345).